We begin with the raw amino-acid sequence, 352 residues long: Methylthioribose-1-phosphate isomerase (352 aa).

Substrate contacts are provided by residues 49–51 (RGA), arginine 93, and glutamine 202. Catalysis depends on aspartate 243, which acts as the Proton donor. 253-254 (NK) is a binding site for substrate.

The protein belongs to the eIF-2B alpha/beta/delta subunits family. MtnA subfamily.

It carries out the reaction 5-(methylsulfanyl)-alpha-D-ribose 1-phosphate = 5-(methylsulfanyl)-D-ribulose 1-phosphate. It functions in the pathway amino-acid biosynthesis; L-methionine biosynthesis via salvage pathway; L-methionine from S-methyl-5-thio-alpha-D-ribose 1-phosphate: step 1/6. Functionally, catalyzes the interconversion of methylthioribose-1-phosphate (MTR-1-P) into methylthioribulose-1-phosphate (MTRu-1-P). The sequence is that of Methylthioribose-1-phosphate isomerase from Magnetococcus marinus (strain ATCC BAA-1437 / JCM 17883 / MC-1).